The primary structure comprises 151 residues: FUN14 domain-containing protein 1A (151 aa).

The short motif at 14–17 is the YXXL element; sequence YEVL. The next 3 helical transmembrane spans lie at 44–64, 71–91, and 130–150; these read YSVA…GFLF, AATA…GGYI, and FVKK…LGLA.

Belongs to the FUN14 family.

Its subcellular location is the mitochondrion outer membrane. In terms of biological role, acts as an activator of hypoxia-induced mitophagy, an important mechanism for mitochondrial quality control. The polypeptide is FUN14 domain-containing protein 1A (fundc1-a) (Xenopus laevis (African clawed frog)).